Consider the following 134-residue polypeptide: ATP synthase epsilon chain, chloroplastic (134 aa).

Belongs to the ATPase epsilon chain family. As to quaternary structure, F-type ATPases have 2 components, CF(1) - the catalytic core - and CF(0) - the membrane proton channel. CF(1) has five subunits: alpha(3), beta(3), gamma(1), delta(1), epsilon(1). CF(0) has three main subunits: a, b and c.

Its subcellular location is the plastid. The protein localises to the chloroplast thylakoid membrane. In terms of biological role, produces ATP from ADP in the presence of a proton gradient across the membrane. This chain is ATP synthase epsilon chain, chloroplastic, found in Pelargonium hortorum (Common geranium).